We begin with the raw amino-acid sequence, 612 residues long: MEIKRKKIRESALFPREDDCLIQEKLDFEIRMRDGICKLLSVSSQKEQLLNAVKNLMVCNARIQNYTAQLRSQMGESNTGNTGRRSSDVGLNERQACPGKVAISGIRIPLMWKDSDHFSNKEKTQRHSVFCMLRLGPEIHDTDMVIVDKTMTDICFDNVTVFADARSDFQLKLELYSCCMEDSSIANTPKKLARKLRNSIGKSAGKKFNSELEATEPEAFLFSTPHMPGARYSLLAQITFTLDSIEDNFRTHSLTITGHEDSSFWLPLYGSMCCRLVAQPACLTDEAMMGFLNQQEMVGGLRSYTKFYCVLKGGNLLCYYTPEEINAKVEPALTVPINKETRIRAVGKDSKSRASSFSVINVVSGEAVTKVFSADCKEELQKWMEAFWQHFYDLSQWKHCSEKLMKINETSPQKPPLFLTREPASVYHDMSIGSPMKLESITDIIHNKIEETDGQFLIGPQEESAPAPWAALFDGNHQLHVERNKPPLLSSDDPSTSSNVKAKKRRAPPPPPNKTPFSKLVEGNDPSDKENIWSRASLVRKSFDTKLSAIMHQLQRPMVVPLTPAPPEKIEVTENKAELDTGTQEPIKPVPTPRQKSLREKLDPRVWLQSQV.

The 77-residue stretch at 3 to 79 (IKRKKIRESA…LRSQMGESNT (77 aa)) folds into the REM-1 domain. In terms of domain architecture, PH spans 285-392 (DEAMMGFLNQ…WMEAFWQHFY (108 aa)). 2 disordered regions span residues 483-530 (RNKP…SDKE) and 574-612 (ENKAELDTGTQEPIKPVPTPRQKSLREKLDPRVWLQSQV). The span at 486-498 (PPLLSSDDPSTSS) shows a compositional bias: low complexity.

The sequence is that of Rhotekin-2 (rtkn2) from Xenopus laevis (African clawed frog).